The sequence spans 359 residues: Membrane-bound lytic murein transglycosylase C (359 aa).

The N-terminal stretch at 1–16 (MKKYLALALIAPLLIS) is a signal peptide. A lipid anchor (N-palmitoyl cysteine) is attached at Cys17. Cys17 carries S-diacylglycerol cysteine lipidation.

The protein belongs to the transglycosylase Slt family.

It localises to the cell outer membrane. It catalyses the reaction Exolytic cleavage of the (1-&gt;4)-beta-glycosidic linkage between N-acetylmuramic acid (MurNAc) and N-acetylglucosamine (GlcNAc) residues in peptidoglycan, from either the reducing or the non-reducing ends of the peptidoglycan chains, with concomitant formation of a 1,6-anhydrobond in the MurNAc residue.. In terms of biological role, murein-degrading enzyme. May play a role in recycling of muropeptides during cell elongation and/or cell division. This is Membrane-bound lytic murein transglycosylase C from Escherichia coli O157:H7.